The sequence spans 374 residues: Nudix hydrolase 20, chloroplastic (374 aa).

The transit peptide at 1-49 directs the protein to the chloroplast; it reads MASGFCSLALTVTTSLFSSHAITRRVLPILRWRSSSMSLSPLRHSRALS. The Nudix hydrolase domain occupies 205–346; sequence GYGVHMNGYV…KANCSLVIID (142 aa). The Nudix box signature appears at 244–265; the sequence is GGLPHGISCGGNLVKECEEEAG. 2 residues coordinate Mg(2+): Glu-259 and Glu-263.

The protein belongs to the Nudix hydrolase family. It depends on Mg(2+) as a cofactor. Mn(2+) is required as a cofactor. In terms of tissue distribution, expressed in leaves and inflorescences.

The protein localises to the plastid. The protein resides in the chloroplast. Probably mediates the hydrolysis of some nucleoside diphosphate derivatives. This chain is Nudix hydrolase 20, chloroplastic (NUDT20), found in Arabidopsis thaliana (Mouse-ear cress).